The sequence spans 882 residues: Alanine--tRNA ligase (882 aa).

Zn(2+)-binding residues include His563, His567, Cys665, and His669.

The protein belongs to the class-II aminoacyl-tRNA synthetase family. Zn(2+) serves as cofactor.

It localises to the cytoplasm. It carries out the reaction tRNA(Ala) + L-alanine + ATP = L-alanyl-tRNA(Ala) + AMP + diphosphate. Its function is as follows. Catalyzes the attachment of alanine to tRNA(Ala) in a two-step reaction: alanine is first activated by ATP to form Ala-AMP and then transferred to the acceptor end of tRNA(Ala). Also edits incorrectly charged Ser-tRNA(Ala) and Gly-tRNA(Ala) via its editing domain. The sequence is that of Alanine--tRNA ligase from Synechococcus sp. (strain RCC307).